A 379-amino-acid polypeptide reads, in one-letter code: Putative nucleosome assembly protein C2D10.11C (379 aa).

Positions 1–10 (MSKGPGDFKK) are enriched in basic and acidic residues. Disordered regions lie at residues 1–30 (MSKG…DVHL) and 345–379 (SDFN…EISD). Residues 16–28 (AAQTPQNTPSSDV) show a composition bias toward polar residues.

Belongs to the nucleosome assembly protein (NAP) family.

The protein resides in the nucleus. In Schizosaccharomyces pombe (strain 972 / ATCC 24843) (Fission yeast), this protein is Putative nucleosome assembly protein C2D10.11C.